Reading from the N-terminus, the 305-residue chain is UDP-3-O-acyl-N-acetylglucosamine deacetylase (305 aa).

Zn(2+)-binding residues include His-78, His-237, and Asp-241. Residue His-264 is the Proton donor of the active site.

It belongs to the LpxC family. Zn(2+) is required as a cofactor.

It carries out the reaction a UDP-3-O-[(3R)-3-hydroxyacyl]-N-acetyl-alpha-D-glucosamine + H2O = a UDP-3-O-[(3R)-3-hydroxyacyl]-alpha-D-glucosamine + acetate. It functions in the pathway glycolipid biosynthesis; lipid IV(A) biosynthesis; lipid IV(A) from (3R)-3-hydroxytetradecanoyl-[acyl-carrier-protein] and UDP-N-acetyl-alpha-D-glucosamine: step 2/6. Catalyzes the hydrolysis of UDP-3-O-myristoyl-N-acetylglucosamine to form UDP-3-O-myristoylglucosamine and acetate, the committed step in lipid A biosynthesis. This is UDP-3-O-acyl-N-acetylglucosamine deacetylase from Paraburkholderia xenovorans (strain LB400).